Reading from the N-terminus, the 635-residue chain is Threonine--tRNA ligase (635 aa).

Positions 1–61 (MIQITLPDNS…DHDARLQIIT (61 aa)) constitute a TGS domain. The interval 242–533 (DHRKLGKELD…LIEHHAGALP (292 aa)) is catalytic. Zn(2+)-binding residues include C333, H384, and H510.

Belongs to the class-II aminoacyl-tRNA synthetase family. As to quaternary structure, homodimer. Zn(2+) is required as a cofactor.

The protein resides in the cytoplasm. The enzyme catalyses tRNA(Thr) + L-threonine + ATP = L-threonyl-tRNA(Thr) + AMP + diphosphate + H(+). In terms of biological role, catalyzes the attachment of threonine to tRNA(Thr) in a two-step reaction: L-threonine is first activated by ATP to form Thr-AMP and then transferred to the acceptor end of tRNA(Thr). Also edits incorrectly charged L-seryl-tRNA(Thr). This chain is Threonine--tRNA ligase, found in Variovorax paradoxus (strain S110).